Reading from the N-terminus, the 668-residue chain is MTLYDENNLHIIKDNLRYLKLLSKQYPSISSASSEIINLQAILNLPKGTEHFISDVHGEYESFTHMLKNASGVIKRKIDDVFGTSLRECDKKNLATLIYYPEQKLDLIKKSEKNLEDWYKITLYRLIRLCQIVSSKYTRSKVRKSLPSDFAYIIEELLNEQGDRVDKQEYYNSIIETIIDIDRASEFIIAISNVIQRLVVDKLHIIGDIYDRGPGAEIIIEALSKHHSIDIQWGNHDIVWMGAAAGCEACIANVIRISLRYANLSTLEDGYGINLLPLATFAMDFYKEDNCENFKPRTIDKNLNETDIKLLSKMHKAISIIQFKLEGKIIKRRPEFKMEERLLLDKINIKEGTLNLNEKIYKLIDTNFPTLDKENPYELNERERDLVEKLTNSFINSEKLQRHIKFLYSNGSLYLKYNSNLLYHGCIPLNEDGSLKEVTLCKETLKGKSLLDKLDRLAREAYFFKKDPESKLYGMDMMWYLWCGPNSPLFGKKKMTTFERYFLDDKNTHKEQKNPYYKYRNDEKMCTMIFEEFELDADNSHIINGHIPVKTKEGENPIKANGKLLVIDGGFCKAYQPQTGIAGYTLIYNSYGLLLTSHEPFSSIHKAIVEGNDILSSTTILEHVSSRKRVLDTDSGEEIKKQIHDLEMLLVAYRKGLIKEENEANIRF.

It belongs to the FBPase class 3 family. Mn(2+) serves as cofactor.

The enzyme catalyses beta-D-fructose 1,6-bisphosphate + H2O = beta-D-fructose 6-phosphate + phosphate. It participates in carbohydrate biosynthesis; gluconeogenesis. This chain is Fructose-1,6-bisphosphatase class 3, found in Clostridium botulinum (strain Kyoto / Type A2).